We begin with the raw amino-acid sequence, 632 residues long: Biosynthetic arginine decarboxylase (632 aa).

At Lys101 the chain carries N6-(pyridoxal phosphate)lysine. 281 to 291 (FDVGGGLGVDY) contributes to the substrate binding site.

This sequence belongs to the Orn/Lys/Arg decarboxylase class-II family. SpeA subfamily. The cofactor is Mg(2+). Pyridoxal 5'-phosphate is required as a cofactor.

It carries out the reaction L-arginine + H(+) = agmatine + CO2. The protein operates within amine and polyamine biosynthesis; agmatine biosynthesis; agmatine from L-arginine: step 1/1. In terms of biological role, catalyzes the biosynthesis of agmatine from arginine. The polypeptide is Biosynthetic arginine decarboxylase (Salmonella dublin (strain CT_02021853)).